A 296-amino-acid chain; its full sequence is Decaprenyl diphosphate synthase (296 aa).

Positions 1–58 (MVRNERTLKSTDFPQLPPAPDDYPTFPDKSTWPVVFPMLPPSPDGGPRRPPQHTSKAV) are disordered. Asp76 is an active-site residue. A Mg(2+)-binding site is contributed by Asp76. Residues 77 to 80 (GNGR), Trp81, Arg89, His93, and 121 to 123 (STE) contribute to the substrate site. The active-site Proton acceptor is Asn124. Residues Trp125, Arg127, Arg244, and 250-252 (RSS) contribute to the substrate site. Glu263 lines the Mg(2+) pocket.

This sequence belongs to the UPP synthase family. In terms of assembly, homodimer. The cofactor is Mg(2+).

Its subcellular location is the cell membrane. The enzyme catalyses (2Z,6E)-farnesyl diphosphate + 7 isopentenyl diphosphate = (2Z,6Z,10Z,14Z,18Z,22Z,26Z,30Z,34E)-decaprenyl diphosphate + 7 diphosphate. It carries out the reaction n isopentenyl diphosphate + (2E,6E)-farnesyl diphosphate = a di-trans,poly-cis-polyprenyl diphosphate + n diphosphate. Catalyzes the sequential condensation of isopentenyl diphosphate (IPP) in the cis configuration with (2Z,6E)-farnesyl diphosphate (Z-FPP or EZ-FPP) generating the 50 carbon product trans,polycis-decaprenyl diphosphate. When (2E,6E)-farnesyl diphosphate (E-FPP or EE-FPP) is used in vitro, both primary products decaprenyl diphosphate and (2E,6E,10E)-geranylgeranyl diphosphate (EEE-GGPP) are synthesized. M.tuberculosis does not synthesize (2E,6E,10Z)-geranylgeranyl diphosphate (EEZ-GGPP) and heptaprenyl diphosphate. Can also accept many different allylic substrates, including E-geranyl diphosphate (E-GPP), neryl diphosphate (NPP), and all-trans-geranyl-geranyl diphosphate. The protein is Decaprenyl diphosphate synthase (uppS) of Mycobacterium leprae (strain TN).